The following is a 198-amino-acid chain: Ribosome maturation factor RimM (198 aa).

The PRC barrel domain maps to 92–168 (DDEYYHADLI…IELPAEIEGE (77 aa)). A compositionally biased stretch (acidic residues) spans 163–172 (AEIEGEDQDS). Residues 163–198 (AEIEGEDQDSSDNAGSPEGDAAASNSARHPRESGDP) are disordered.

The protein belongs to the RimM family. As to quaternary structure, binds ribosomal protein uS19.

It localises to the cytoplasm. Functionally, an accessory protein needed during the final step in the assembly of 30S ribosomal subunit, possibly for assembly of the head region. Essential for efficient processing of 16S rRNA. May be needed both before and after RbfA during the maturation of 16S rRNA. It has affinity for free ribosomal 30S subunits but not for 70S ribosomes. The protein is Ribosome maturation factor RimM of Bradyrhizobium sp. (strain BTAi1 / ATCC BAA-1182).